Here is a 572-residue protein sequence, read N- to C-terminus: Isocitrate dehydrogenase kinase/phosphatase (572 aa).

Residues 317–323 and Lys338 contribute to the ATP site; that span reads APGVRGM. Asp373 is an active-site residue.

The protein belongs to the AceK family.

Its subcellular location is the cytoplasm. It carries out the reaction L-seryl-[isocitrate dehydrogenase] + ATP = O-phospho-L-seryl-[isocitrate dehydrogenase] + ADP + H(+). Its function is as follows. Bifunctional enzyme which can phosphorylate or dephosphorylate isocitrate dehydrogenase (IDH) on a specific serine residue. This is a regulatory mechanism which enables bacteria to bypass the Krebs cycle via the glyoxylate shunt in response to the source of carbon. When bacteria are grown on glucose, IDH is fully active and unphosphorylated, but when grown on acetate or ethanol, the activity of IDH declines drastically concomitant with its phosphorylation. This is Isocitrate dehydrogenase kinase/phosphatase from Ectopseudomonas mendocina (strain ymp) (Pseudomonas mendocina).